Consider the following 337-residue polypeptide: MNFKYSILFICFVKVLDNCYAADDLTTLRNGTLDRGITPDCTFNEKDIELHVYSRDKRNGIILKKEILKNYDLFQKSQISHQIAILIHGFLSTGNNENFDAMAKALIEIDNFLVISVDWKKGACNAFASTNDVLGYSQAVGNTRHVGKYVADFTKLLVEQYKVPMSNIRLIGHSLGAHTSGFAGKEVQRLKLGKYKEIIGLDPAGPSFLTNKCPNRLCETDAEYVQAIHTSAILGVYYNVGSVDFYVNYGKSQPGCSEPSCSHTKAVKYLTECIKRECCLIGTPWKSYFSTPKPISQCKRDTCVCVGLNAQSYPAKGSFYVPVDKDAPYCHNEGIKL.

The first 21 residues, 1 to 21 (MNFKYSILFICFVKVLDNCYA), serve as a signal peptide directing secretion. Residues 22 to 35 (ADDLTTLRNGTLDR) constitute a propeptide that is removed on maturation. A disulfide bridge connects residues C41 and C124. The Nucleophile role is filled by S174. D202 serves as the catalytic Charge relay system. Intrachain disulfides connect C213-C218 and C256-C261. Catalysis depends on H263, which acts as the Charge relay system. 3 disulfide bridges follow: C278–C305, C279–C330, and C298–C303.

The protein belongs to the AB hydrolase superfamily. Lipase family. As to expression, expressed by the venom gland.

It is found in the secreted. The enzyme catalyses a 1,2-diacyl-sn-glycero-3-phosphocholine + H2O = a 2-acyl-sn-glycero-3-phosphocholine + a fatty acid + H(+). Catalyzes the hydrolysis of phosphatidylcholine with phospholipase A1 activity. May act as an allergen and induce hemolytic activity. The chain is Phospholipase A1 1 from Polistes dominula (European paper wasp).